Consider the following 431-residue polypeptide: Cytochrome c oxidase subunit 3 (431 aa).

7 consecutive transmembrane segments (helical) span residues 70 to 90 (IAPL…FGVI), 96 to 116 (FVIA…SIVF), 132 to 152 (LVMG…SFFW), 176 to 196 (VYSY…SGAI), 321 to 341 (LYFT…EYYF), 356 to 376 (FLLT…IGII), and 408 to 428 (LFYW…IYWW).

It belongs to the cytochrome c oxidase subunit 3 family. In terms of assembly, component of the cytochrome c oxidase (complex IV, CIV), a multisubunit enzyme composed of a catalytic core of 3 subunits and several supernumerary subunits. The complex exists as a monomer or a dimer and forms supercomplexes (SCs) in the inner mitochondrial membrane with ubiquinol-cytochrome c oxidoreductase (cytochrome b-c1 complex, complex III, CIII).

The protein resides in the mitochondrion inner membrane. It carries out the reaction 4 Fe(II)-[cytochrome c] + O2 + 8 H(+)(in) = 4 Fe(III)-[cytochrome c] + 2 H2O + 4 H(+)(out). Its function is as follows. Component of the cytochrome c oxidase, the last enzyme in the mitochondrial electron transport chain which drives oxidative phosphorylation. The respiratory chain contains 3 multisubunit complexes succinate dehydrogenase (complex II, CII), ubiquinol-cytochrome c oxidoreductase (cytochrome b-c1 complex, complex III, CIII) and cytochrome c oxidase (complex IV, CIV), that cooperate to transfer electrons derived from NADH and succinate to molecular oxygen, creating an electrochemical gradient over the inner membrane that drives transmembrane transport and the ATP synthase. Cytochrome c oxidase is the component of the respiratory chain that catalyzes the reduction of oxygen to water. Electrons originating from reduced cytochrome c in the intermembrane space (IMS) are transferred via the dinuclear copper A center (CU(A)) of subunit 2 and heme A of subunit 1 to the active site in subunit 1, a binuclear center (BNC) formed by heme A3 and copper B (CU(B)). The BNC reduces molecular oxygen to 2 water molecules using 4 electrons from cytochrome c in the IMS and 4 protons from the mitochondrial matrix. This chain is Cytochrome c oxidase subunit 3 (cox3), found in Dictyostelium citrinum (Slime mold).